We begin with the raw amino-acid sequence, 509 residues long: Leucine-rich repeat-containing protein 14 (509 aa).

One copy of the LRR 1; degenerate repeat lies at 111–146 (RQRLRLLDMTGMQEEGLEQNPDTMSLWSRTVTLAKA). The stretch at 210 to 234 (RLQCRDFRAEELSLRSTAGLLELLN) is one LRR 2; degenerate repeat. The LRR 3; degenerate repeat unit spans residues 235-262 (PGSVRQIDLRFNNLGLSGLNVLLPHMAK). One copy of the LRR 4; degenerate repeat lies at 263-298 (FSHLQSLKLPYSNVDVRRLSPVMEEGLQSFASQLGQ). LRR repeat units follow at residues 299 to 323 (LGAL…LGGL), 324 to 355 (QRPL…SSLR), 356 to 374 (KLDL…PFLH), 380 to 407 (SGHL…ILCR), and 408 to 432 (CSWL…VLQN).

It belongs to the PRAME family. LRRC14 subfamily.

The protein resides in the cytoplasm. The protein is Leucine-rich repeat-containing protein 14 of Xenopus laevis (African clawed frog).